We begin with the raw amino-acid sequence, 313 residues long: Zinc transporter ZitB (313 aa).

Topologically, residues 1–20 are cytoplasmic; that stretch reads MAHSHSHTSSHLPEDNNARR. The chain crosses the membrane as a helical span at residues 21 to 41; the sequence is LLYAFGVTAGFMLVEVVGGFL. Residues 42–47 are Periplasmic-facing; it reads SGSLAL. Residues 48–68 form a helical membrane-spanning segment; it reads LADAGHMLTDTAALLFALLAV. The Cytoplasmic portion of the chain corresponds to 69–89; the sequence is QFSRRPPTIRHTFGWLRLTTL. A helical transmembrane segment spans residues 90 to 110; it reads AAFVNAIALVVITILIVWEAI. The Periplasmic portion of the chain corresponds to 111-121; the sequence is ERFRTPRPVEG. The helical transmembrane segment at 122–142 threads the bilayer; that stretch reads GMMMAIAVAGLLANILSFWLL. At 143–159 the chain is on the cytoplasmic side; it reads HHGSEEKNLNVRAAALH. Residues 160–180 traverse the membrane as a helical segment; it reads VLGDLLGSVGAIIAALIIIWT. A topological domain (periplasmic) is located at residue Gly181. Residues 182-202 traverse the membrane as a helical segment; the sequence is WTPADPILSILVSLLVLRSAW. At 203-313 the chain is on the cytoplasmic side; the sequence is RLLKDSVNEL…GVSGHSHHHH (111 aa).

This sequence belongs to the cation diffusion facilitator (CDF) transporter (TC 2.A.4) family. SLC30A subfamily.

Its subcellular location is the cell inner membrane. In terms of biological role, involved in zinc efflux across the cytoplasmic membrane, thus reducing zinc accumulation in the cytoplasm and rendering bacteria more resistant to zinc. It may contribute to zinc homeostasis at low concentrations of zinc. In Shigella flexneri, this protein is Zinc transporter ZitB (zitB).